An 849-amino-acid chain; its full sequence is Formin-like protein 4 (849 aa).

A signal peptide spans 1–22 (MPPTLALLLFLALSAVAAVGGA). Residues 36-104 (IEWTPPPSTA…RARGGGGGGT (69 aa)) are disordered. Residues 38–52 (WTPPPSTASPSPPSP) are compositionally biased toward pro residues. The span at 53–64 (DFSSDPSTPATP) shows a compositional bias: low complexity. Residues 109–129 (IVVASAAAAAVLALLAFAAAF) traverse the membrane as a helical segment. The span at 185–194 (ARRGMCRDVD) shows a compositional bias: basic and acidic residues. The disordered stretch occupies residues 185–364 (ARRGMCRDVD…PEPPTGPVSA (180 aa)). The segment covering 234–246 (GSGGGGGGEGGGT) has biased composition (gly residues). Low complexity predominate over residues 247–279 (WSEASASSPRTTTASRRSLPSLTSDFFPTTPAA). Pro residues-rich tracts occupy residues 280-297 (APVPAPAAAAPPPAPPAP), 324-339 (PSNPPPAPPPPPPPPS), and 346-360 (PKPPPPPPPPEPPTG). Residues 406 to 823 (EAAGDEPRPK…SARSFRISAA (418 aa)) form the FH2 domain.

It belongs to the formin-like family. Class-I subfamily.

It is found in the membrane. This is Formin-like protein 4 (FH4) from Oryza sativa subsp. japonica (Rice).